Consider the following 993-residue polypeptide: MPTTGPASIPDDTLEKHTLRSETSTYNLTVGDTGSGLIVFFPGFPGSIVGAHYTLQSNGNYKFDQMLLTAQNLPASYNYCRLVSRSLTVRSSTLPGGVYALNGTINAVTFQGSLSELTDVSYNGLMSATANINDKIGNVLVGEGVTVLSLPTSYDLGYVRLGDPIPAIGLDPKMVATCDSSDRPRVYTITAADDYQFSSQYQPGGVTITLFSANIDAITSLSVGGELVFRTSVHGLVLGATIYLIGFDGTTVITRAVAANTGLTTGTDNLMPFNLVIPTNEITQPITSIKLEIVTSKSGGQAGDQMLWSARGSLAVTIHGGNYPGALRPVTLVAYERVATGSVVTVAGVSNFELIPNPELAKNLVTEYGRFDPGAMNYTKLILSERDRLGIKTVWPTREYTDFREYFMEVADLNSPLKIAGAFGFKDIIRAIRRIAVPVVSTLFPPAAPLAHAIGEGVDYLLGDEAQAASGTARAASGKARAASGRIRQLTLAADKGYEVVANLFQVPQNPVVDGILASPGVLRGAHNLDCVLREGATLFPVVITTVEDAMTPKALNSKMFAVIEGVREDLQPPSQRGSFIRTLSGHRVYGYAPDGVLPLETGRDYTVVPIDDVWDDSIMLSKDPIPPIVGNSGNLAIAYMDVFRPKVPIHVAMTGALNACGEIEKVSFRSTKLATAHRLGLKLAGPGAFDVNTGPNWATFIKRFPHNPRDWDRLPYLNLPYLPPNAGRQYHLAMAASEFKETPELESAVRAMEAAANVDPLFQSALSVFMWLEENGIVTDMANFALSDPNAHRMRNFLANAPQAGSKSQRAKYGTAGYGVEARGPTPEEAQREKDTRISKKMETMGIYFATPEWVALNGHRGPSPGQLKYWQNTREIPDPNEDYLDYVHAEKSRLASEEQILRAATSIYGAPGQAEPPQAFIDEVAKVYEINHGRGPNQEQMKDLLLTAMEMKHRNPRRALPKPKPKPNAPTQRPPGRLGRWIRTVSDEDLE.

Residue aspartate 11 coordinates a divalent metal cation. The region spanning 494-736 (ADKGYEVVAN…AGRQYHLAMA (243 aa)) is the Peptidase S50 domain. Serine 633 (nucleophile) is an active-site residue. Lysine 673 is an active-site residue. Positions 950 to 993 (AMEMKHRNPRRALPKPKPKPNAPTQRPPGRLGRWIRTVSDEDLE) are disordered. Positions 956–967 (RNPRRALPKPKP) are enriched in basic residues. Residues 984–993 (IRTVSDEDLE) are interaction with VP1 protein.

As to quaternary structure, homotrimer. A central divalent metal stabilizes the VP2 trimer. Interacts with host ITGA4/ITGB1. In terms of assembly, homodimer. Interacts (via C-terminus) with VP1 in the cytoplasm. Interacts with VP2. Post-translationally, specific enzymatic cleavages yield mature proteins. The capsid assembly seems to be regulated by polyprotein processing. The protease VP4 cleaves itself off the polyprotein, thus releasing pre-VP2 and VP3 within the infected cell. During capsid assembly, the C-terminus of pre-VP2 is further processed by VP4, giving rise to VP2, the external capsid protein and three small peptides that all stay closely associated with the capsid.

The protein resides in the virion. It localises to the host cytoplasm. Functionally, capsid protein VP2 self assembles to form an icosahedral capsid with a T=13 symmetry, about 70 nm in diameter, and consisting of 260 VP2 trimers. The capsid encapsulates the genomic dsRNA. VP2 is also involved in attachment and entry into the host cell by interacting with host ITGA4/ITGB1. In terms of biological role, the precursor of VP2 plays an important role in capsid assembly. First, pre-VP2 and VP2 oligomers assemble to form a procapsid. Then, the pre-VP2 intermediates may be processed into VP2 proteins by proteolytic cleavage mediated by VP4 to obtain the mature virion. The final capsid is composed of pentamers and hexamers but VP2 has a natural tendency to assemble into all-pentameric structures. Therefore pre-VP2 may be required to allow formation of the hexameric structures. Its function is as follows. Protease VP4 is a serine protease that cleaves the polyprotein into its final products. Pre-VP2 is first partially cleaved, and may be completely processed by VP4 upon capsid maturation. Capsid protein VP3 plays a key role in virion assembly by providing a scaffold for the capsid made of VP2. May self-assemble to form a T=4-like icosahedral inner-capsid composed of at least 180 trimers. Plays a role in genomic RNA packaging by recruiting VP1 into the capsid and interacting with the dsRNA genome segments to form a ribonucleoprotein complex. Additionally, the interaction of the VP3 C-terminal tail with VP1 removes the inherent structural blockade of the polymerase active site. Thus, VP3 can also function as a transcriptional activator. Functionally, structural peptide 1 is a small peptide derived from pre-VP2 C-terminus. It destabilizes and perforates cell membranes, suggesting a role during entry. In terms of biological role, structural peptide 2 is a small peptide derived from pVP2 C-terminus. It is not essential for the virus viability, but viral growth is affected when missing. Its function is as follows. Structural peptide 3 is a small peptide derived from pVP2 C-terminus. It is not essential for the virus viability, but viral growth is affected when missing. Structural peptide 4 is a small peptide derived from pVP2 C-terminus. It is essential for the virus viability. The protein is Structural polyprotein of Avian infectious bursal disease virus (strain PBG-98) (IBDV).